The sequence spans 341 residues: Long-chain acyl-[acyl-carrier-protein] reductase (341 aa).

It belongs to the short-chain dehydrogenases/reductases (SDR) family. A divalent metal cation serves as cofactor.

It catalyses the reaction a long-chain fatty aldehyde + holo-[ACP] + NADP(+) = a long-chain fatty acyl-[ACP] + NADPH + H(+). It carries out the reaction a long-chain fatty aldehyde + holo-[ACP] + NAD(+) = a long-chain fatty acyl-[ACP] + NADH + H(+). Its function is as follows. Catalyzes the NADP-dependent reduction of long-chain acyl-ACP to the corresponding fatty aldehyde. Involved in the biosynthesis of alkanes, mainly heptadecane and pentadecane, by producing the fatty aldehydes used by aldehyde decarbonylase. The sequence is that of Long-chain acyl-[acyl-carrier-protein] reductase from Synechococcus elongatus (strain ATCC 33912 / PCC 7942 / FACHB-805) (Anacystis nidulans R2).